The primary structure comprises 192 residues: T-cell surface glycoprotein CD3 epsilon chain (192 aa).

A signal peptide spans 1 to 21; that stretch reads MQSGNLWRALGLCLLLVGAWA. The Extracellular segment spans residues 23–114; that stretch reads DADEQKPYEV…QNCMEVNLME (92 aa). Positions 26-97 constitute an Ig-like domain; that stretch reads EQKPYEVSIS…EGNKEAAHTL (72 aa). An intrachain disulfide couples Cys43 to Cys84. N-linked (GlcNAc...) asparagine glycosylation is present at Asn72. Residues 115–135 traverse the membrane as a helical segment; sequence VATIIVVDICVTLGLLLLVYY. Residues 136–192 are Cytoplasmic-facing; that stretch reads WSKSRKAKASPMTRGAGAGGRPRGQNKGRPPPVPNPDYEPIRKGQRDLYAGLNQRGV. The tract at residues 145–180 is disordered; the sequence is SPMTRGAGAGGRPRGQNKGRPPPVPNPDYEPIRKGQ. The tract at residues 160–177 is NUMB-binding region; that stretch reads QNKGRPPPVPNPDYEPIR. Residues 163 to 190 form the ITAM domain; the sequence is GRPPPVPNPDYEPIRKGQRDLYAGLNQR. Residues 164 to 171 are proline-rich sequence; sequence RPPPVPNP. Tyr173 and Tyr184 each carry phosphotyrosine.

As to quaternary structure, the TCR-CD3 complex is composed of a CD3D/CD3E and a CD3G/CD3E heterodimers that preferentially associate with TCRalpha and TCRbeta, respectively, to form TCRalpha/CD3E/CD3G and TCRbeta/CD3G/CD3E trimers. In turn, the hexamer interacts with CD3Z homodimer to form the TCR-CD3 complex. Alternatively, TCRalpha and TCRbeta can be replaced by TCRgamma and TCRdelta. Interacts with CD6. Interacts (via Proline-rich sequence) with NCK1; the interaction is ligand dependent but independent of tyrosine kinase activation. Post-translationally, phosphorylated on Tyr residues after T-cell receptor triggering by LCK in association with CD4/CD8.

The protein resides in the cell membrane. Its function is as follows. Part of the TCR-CD3 complex present on T-lymphocyte cell surface that plays an essential role in adaptive immune response. When antigen presenting cells (APCs) activate T-cell receptor (TCR), TCR-mediated signals are transmitted across the cell membrane by the CD3 chains CD3D, CD3E, CD3G and CD3Z. All CD3 chains contain immunoreceptor tyrosine-based activation motifs (ITAMs) in their cytoplasmic domain. Upon TCR engagement, these motifs become phosphorylated by Src family protein tyrosine kinases LCK and FYN, resulting in the activation of downstream signaling pathways. In addition of this role of signal transduction in T-cell activation, CD3E plays an essential role in correct T-cell development. Also participates in internalization and cell surface down-regulation of TCR-CD3 complexes via endocytosis sequences present in CD3E cytosolic region. In addition to its role as a TCR coreceptor, it serves as a receptor for ITPRIPL1. Ligand recognition inhibits T-cell activation by promoting interaction with NCK1, which prevents CD3E-ZAP70 interaction and blocks the ERK-NFkB signaling cascade and calcium influx. This chain is T-cell surface glycoprotein CD3 epsilon chain (CD3E), found in Bos taurus (Bovine).